A 152-amino-acid polypeptide reads, in one-letter code: Superoxide dismutase [Cu-Zn] 2 (152 aa).

Residues His45, His47, and His62 each contribute to the Cu cation site. Cys56 and Cys145 are oxidised to a cystine. Residues His62, His70, His79, and Asp82 each coordinate Zn(2+). Residue His119 participates in Cu cation binding.

The protein belongs to the Cu-Zn superoxide dismutase family. Homodimer. Cu cation is required as a cofactor. Requires Zn(2+) as cofactor.

The protein resides in the cytoplasm. It catalyses the reaction 2 superoxide + 2 H(+) = H2O2 + O2. Its function is as follows. Destroys radicals which are normally produced within the cells and which are toxic to biological systems. The polypeptide is Superoxide dismutase [Cu-Zn] 2 (SODCC.5) (Solanum lycopersicum (Tomato)).